We begin with the raw amino-acid sequence, 420 residues long: Glycogen synthase kinase-3 beta (420 aa).

A compositionally biased stretch (polar residues) spans 1-22 (MSGRPRTTSFAESCKPVQQPSA). The tract at residues 1 to 35 (MSGRPRTTSFAESCKPVQQPSAFGSMKVSRDKDGS) is disordered. S9 bears the Phosphoserine; by PKB/AKT1, RPS6KA3 and SGK3 mark. The S-palmitoyl cysteine moiety is linked to residue C14. In terms of domain architecture, Protein kinase spans 56–340 (YTDTKVIGNG…PLEACAHSFF (285 aa)). Residues 62–70 (IGNGSFGVV) and K85 each bind ATP. D181 acts as the Proton acceptor in catalysis. Residue Y216 is modified to Phosphotyrosine. Low complexity-rich tracts occupy residues 387 to 401 (AASTPTNATAASDAN) and 409 to 420 (NNAAFASASNST). The segment at 387–420 (AASTPTNATAASDANAGDRGQTNNAAFASASNST) is disordered. Phosphoserine is present on S389. T390 bears the Phosphothreonine mark.

The protein belongs to the protein kinase superfamily. CMGC Ser/Thr protein kinase family. GSK-3 subfamily. Monomer. Interacts with DAB2IP (via C2 domain); the interaction stimulates GSK3B kinase activation. Interacts (via C2 domain) with PPP2CA. Interacts with ARRB2, AXIN1, CABYR, DISC1, MMP2, MUC1, NIN, PRUNE1 and ZBED3. Interacts with AXIN1; the interaction mediates hyperphosphorylation of CTNNB1 leading to its ubiquitination and destruction. Interacts with and phosphorylates SNAI1. Interacts with DNM1L (via a C-terminal domain). Found in a complex composed of MACF1, APC, AXIN1, CTNNB1 and GSK3B. Interacts with SGK3. Interacts with the CLOCK-BMAL1 heterodimer. Interacts with the BMAL1. Interacts with CTNND2. The complex composed, at least, of APC, CTNNB1 and GSK3B interacts with JPT1; the interaction requires the inactive form of GSK3B (phosphorylated at 'Ser-9'). Forms a complex composed of PRKAR2A or PRKAR2B, GSK3B and GSKIP through GSKIP interaction; facilitates PKA-induced phosphorylation and regulates GSK3B activity. Interacts with GSKIP. Interacts with GID8. Interacts with PIWIL2. Interacts with LMBR1L. Interacts with DDX3X. Interacts with BIRC2. Interacts with TNFRSF10B; TNFRSF10B stimulation inhibits GSK3B kinase activity. Found in a complex with SLC39A6, SLC39A10 and with GSK3B that controls NCAM1 phosphorylation. Interacts with PKP3 (via ARM repeats); the interaction may be involved in PKP3 protein degradation. Phosphorylated by AKT1 and ILK1. Upon insulin-mediated signaling, the activated PKB/AKT1 and RPS6KA3 protein kinases phosphorylate and deactivate GSK3B, resulting in the dephosphorylation and activation of GYS1. Activated by phosphorylation at Tyr-216. Inactivated by phosphorylation at Ser-9. In terms of processing, mono-ADP-ribosylation by PARP10 negatively regulates kinase activity. Post-translationally, palmitoylated. Palmitoylation by ZDHHC4 prevents AKT1-mediated phosphorylation.

It is found in the cytoplasm. The protein resides in the nucleus. Its subcellular location is the cell membrane. It catalyses the reaction L-seryl-[tau protein] + ATP = O-phospho-L-seryl-[tau protein] + ADP + H(+). The enzyme catalyses L-threonyl-[tau protein] + ATP = O-phospho-L-threonyl-[tau protein] + ADP + H(+). It carries out the reaction L-seryl-[protein] + ATP = O-phospho-L-seryl-[protein] + ADP + H(+). The catalysed reaction is L-threonyl-[protein] + ATP = O-phospho-L-threonyl-[protein] + ADP + H(+). With respect to regulation, activated by phosphorylation at Tyr-216. In response to insulin, inhibited by phosphorylation at Ser-9 by PKB/AKT1; phosphorylation at this site causes a conformational change, preventing access of substrates to the active site. Inhibited by IL22 treatment which also triggers phosphorylation at Ser-9, promoting inactivation. Inhibited by lithium. In terms of biological role, constitutively active protein kinase that acts as a negative regulator in the hormonal control of glucose homeostasis, Wnt signaling and regulation of transcription factors and microtubules, by phosphorylating and inactivating glycogen synthase (GYS1 or GYS2), EIF2B, CTNNB1/beta-catenin, APC, AXIN1, DPYSL2/CRMP2, JUN, NFATC1/NFATC, MAPT/TAU and MACF1. Requires primed phosphorylation of the majority of its substrates. In skeletal muscle, contributes to insulin regulation of glycogen synthesis by phosphorylating and inhibiting GYS1 activity and hence glycogen synthesis. May also mediate the development of insulin resistance by regulating activation of transcription factors. Regulates protein synthesis by controlling the activity of initiation factor 2B (EIF2BE/EIF2B5) in the same manner as glycogen synthase. In Wnt signaling, GSK3B forms a multimeric complex with APC, AXIN1 and CTNNB1/beta-catenin and phosphorylates the N-terminus of CTNNB1 leading to its degradation mediated by ubiquitin/proteasomes. Phosphorylates JUN at sites proximal to its DNA-binding domain, thereby reducing its affinity for DNA. Phosphorylates NFATC1/NFATC on conserved serine residues promoting NFATC1/NFATC nuclear export, shutting off NFATC1/NFATC gene regulation, and thereby opposing the action of calcineurin. Phosphorylates MAPT/TAU on 'Thr-548', decreasing significantly MAPT/TAU ability to bind and stabilize microtubules. MAPT/TAU is the principal component of neurofibrillary tangles in Alzheimer disease. Plays an important role in ERBB2-dependent stabilization of microtubules at the cell cortex. Phosphorylates MACF1, inhibiting its binding to microtubules which is critical for its role in bulge stem cell migration and skin wound repair. Probably regulates NF-kappa-B (NFKB1) at the transcriptional level and is required for the NF-kappa-B-mediated anti-apoptotic response to TNF-alpha (TNF/TNFA). Negatively regulates replication in pancreatic beta-cells, resulting in apoptosis, loss of beta-cells and diabetes. Through phosphorylation of the anti-apoptotic protein MCL1, may control cell apoptosis in response to growth factors deprivation. Phosphorylates MUC1 in breast cancer cells, decreasing the interaction of MUC1 with CTNNB1/beta-catenin. Is necessary for the establishment of neuronal polarity and axon outgrowth. Phosphorylates MARK2, leading to inhibition of its activity. Phosphorylates SIK1 at 'Thr-182', leading to sustainment of its activity. Phosphorylates ZC3HAV1 which enhances its antiviral activity. Phosphorylates SNAI1, leading to its ubiquitination and proteasomal degradation. Phosphorylates SFPQ at 'Thr-687' upon T-cell activation. Phosphorylates NR1D1 st 'Ser-55' and 'Ser-59' and stabilizes it by protecting it from proteasomal degradation. Regulates the circadian clock via phosphorylation of the major clock components including BMAL1, CLOCK and PER2. Phosphorylates CLOCK AT 'Ser-427' and targets it for proteasomal degradation. Phosphorylates BMAL1 at 'Ser-17' and 'Ser-21' and primes it for ubiquitination and proteasomal degradation. Phosphorylates FBXL2 at 'Thr-404' and primes it for ubiquitination by the SCF(FBXO3) complex and proteasomal degradation. Phosphorylates OGT at 'Ser-3' or 'Ser-4' which positively regulates its activity. Phosphorylates MYCN in neuroblastoma cells which may promote its degradation. Regulates the circadian rhythmicity of hippocampal long-term potentiation and BMAL1 and PER2 expression. Acts as a regulator of autophagy by mediating phosphorylation of KAT5/TIP60 under starvation conditions, activating KAT5/TIP60 acetyltransferase activity and promoting acetylation of key autophagy regulators, such as ULK1 and RUBCNL/Pacer. Negatively regulates extrinsic apoptotic signaling pathway via death domain receptors. Promotes the formation of an anti-apoptotic complex, made of DDX3X, BRIC2 and GSK3B, at death receptors, including TNFRSF10B. The anti-apoptotic function is most effective with weak apoptotic signals and can be overcome by stronger stimulation. Phosphorylates E2F1, promoting the interaction between E2F1 and USP11, stabilizing E2F1 and promoting its activity. Phosphorylates mTORC2 complex component RICTOR at 'Ser-1235' in response to endoplasmic stress, inhibiting mTORC2. Phosphorylates FXR1, promoting FXR1 ubiquitination by the SCF(FBXO4) complex and FXR1 degradation by the proteasome. Phosphorylates interleukin-22 receptor subunit IL22RA1, preventing its proteasomal degradation. This is Glycogen synthase kinase-3 beta from Spermophilus citellus (European ground squirrel).